Here is an 89-residue protein sequence, read N- to C-terminus: Small ribosomal subunit protein uS14A (89 aa).

Belongs to the universal ribosomal protein uS14 family. In terms of assembly, part of the 30S ribosomal subunit. Contacts proteins S3 and S10.

Functionally, binds 16S rRNA, required for the assembly of 30S particles and may also be responsible for determining the conformation of the 16S rRNA at the A site. The sequence is that of Small ribosomal subunit protein uS14A from Pediococcus pentosaceus (strain ATCC 25745 / CCUG 21536 / LMG 10740 / 183-1w).